A 420-amino-acid chain; its full sequence is Gamma-glutamyl phosphate reductase 2 (420 aa).

Belongs to the gamma-glutamyl phosphate reductase family.

It localises to the cytoplasm. The catalysed reaction is L-glutamate 5-semialdehyde + phosphate + NADP(+) = L-glutamyl 5-phosphate + NADPH + H(+). It functions in the pathway amino-acid biosynthesis; L-proline biosynthesis; L-glutamate 5-semialdehyde from L-glutamate: step 2/2. In terms of biological role, catalyzes the NADPH-dependent reduction of L-glutamate 5-phosphate into L-glutamate 5-semialdehyde and phosphate. The product spontaneously undergoes cyclization to form 1-pyrroline-5-carboxylate. The polypeptide is Gamma-glutamyl phosphate reductase 2 (Synechocystis sp. (strain ATCC 27184 / PCC 6803 / Kazusa)).